The sequence spans 299 residues: Putative hydrolase YtaP (299 aa).

Belongs to the dienelactone hydrolase family.

The protein is Putative hydrolase YtaP (ytaP) of Bacillus subtilis (strain 168).